The sequence spans 358 residues: DNA polymerase IV (358 aa).

A UmuC domain is found at 4 to 185 (IIHVDMDCFY…LPLIKIPGVG (182 aa)). The Mg(2+) site is built by aspartate 8 and aspartate 103. Residue glutamate 104 is part of the active site.

It belongs to the DNA polymerase type-Y family. As to quaternary structure, monomer. It depends on Mg(2+) as a cofactor.

The protein localises to the cytoplasm. It carries out the reaction DNA(n) + a 2'-deoxyribonucleoside 5'-triphosphate = DNA(n+1) + diphosphate. In terms of biological role, poorly processive, error-prone DNA polymerase involved in untargeted mutagenesis. Copies undamaged DNA at stalled replication forks, which arise in vivo from mismatched or misaligned primer ends. These misaligned primers can be extended by PolIV. Exhibits no 3'-5' exonuclease (proofreading) activity. May be involved in translesional synthesis, in conjunction with the beta clamp from PolIII. The polypeptide is DNA polymerase IV (Shewanella halifaxensis (strain HAW-EB4)).